The following is a 397-amino-acid chain: MKILVINCGSSSLKYQLIDMTNEDVLVKGLVERIGIEGSRIKHEKKGMDAVLIEEKMNDHKRAIQLVLEALIDKNHGVVKSMDEITAVGHRVVHGGEEFNKSVLLDDRVMAGIKECIDLAPLHNPANIMGIEACKALMPKTPMVAVFDTAFHQTMPAENYIYALPYEYYEKYKIRRYGFHGTSHRFVSEKASETLKNNSADFKVITCHLGNGSSLAAIKGGKCVDTSMGLTPLEGLVMGTRSGDLDPAILPFIMNKEKLSADEMSNVLNKKSGVFGISGVSSDFRDIETAAKEGNKRAQLALDVFCNRVRKYIASYAAQLGGVDALVFTAGIGENSIELREKICHGLEFLGVELDSEKNKVRGKLTDASKASSKVKVLIIPTNEELMIAKDTMALVK.

Mg(2+) is bound at residue Asn7. Lys14 contributes to the ATP binding site. Arg91 is a substrate binding site. Residue Asp148 is the Proton donor/acceptor of the active site. ATP-binding positions include 208–212, 283–285, and 331–335; these read HLGNG, DFR, and GIGEN. Glu384 contacts Mg(2+).

Belongs to the acetokinase family. As to quaternary structure, homodimer. It depends on Mg(2+) as a cofactor. Requires Mn(2+) as cofactor.

The protein localises to the cytoplasm. It catalyses the reaction acetate + ATP = acetyl phosphate + ADP. It functions in the pathway metabolic intermediate biosynthesis; acetyl-CoA biosynthesis; acetyl-CoA from acetate: step 1/2. Its function is as follows. Catalyzes the formation of acetyl phosphate from acetate and ATP. Can also catalyze the reverse reaction. The chain is Acetate kinase from Treponema denticola (strain ATCC 35405 / DSM 14222 / CIP 103919 / JCM 8153 / KCTC 15104).